We begin with the raw amino-acid sequence, 318 residues long: Protoheme IX farnesyltransferase (318 aa).

Helical transmembrane passes span 31 to 51, 55 to 75, 98 to 118, 125 to 145, 153 to 173, 181 to 201, 206 to 228, 238 to 260, and 285 to 305; these read IILL…QGPL, LAIA…TLNC, IQPF…FILL, LAAG…THGL, IVIG…AVTG, ILFA…ALMI, AAVK…QILA, LALA…LLGL, and FSIF…LPGA.

The protein belongs to the UbiA prenyltransferase family. Protoheme IX farnesyltransferase subfamily.

The protein localises to the cell inner membrane. It carries out the reaction heme b + (2E,6E)-farnesyl diphosphate + H2O = Fe(II)-heme o + diphosphate. It functions in the pathway porphyrin-containing compound metabolism; heme O biosynthesis; heme O from protoheme: step 1/1. Converts heme B (protoheme IX) to heme O by substitution of the vinyl group on carbon 2 of heme B porphyrin ring with a hydroxyethyl farnesyl side group. This is Protoheme IX farnesyltransferase from Synechococcus elongatus (strain ATCC 33912 / PCC 7942 / FACHB-805) (Anacystis nidulans R2).